Here is a 303-residue protein sequence, read N- to C-terminus: UDP-3-O-acyl-N-acetylglucosamine deacetylase (303 aa).

Residues H78, H237, and D241 each coordinate Zn(2+). H264 functions as the Proton donor in the catalytic mechanism.

This sequence belongs to the LpxC family. The cofactor is Zn(2+).

The enzyme catalyses a UDP-3-O-[(3R)-3-hydroxyacyl]-N-acetyl-alpha-D-glucosamine + H2O = a UDP-3-O-[(3R)-3-hydroxyacyl]-alpha-D-glucosamine + acetate. It functions in the pathway glycolipid biosynthesis; lipid IV(A) biosynthesis; lipid IV(A) from (3R)-3-hydroxytetradecanoyl-[acyl-carrier-protein] and UDP-N-acetyl-alpha-D-glucosamine: step 2/6. Catalyzes the hydrolysis of UDP-3-O-myristoyl-N-acetylglucosamine to form UDP-3-O-myristoylglucosamine and acetate, the committed step in lipid A biosynthesis. The protein is UDP-3-O-acyl-N-acetylglucosamine deacetylase of Pseudomonas putida (strain GB-1).